Here is a 419-residue protein sequence, read N- to C-terminus: UDP-N-acetylglucosamine 1-carboxyvinyltransferase 2 (419 aa).

Residue 22 to 23 coordinates phosphoenolpyruvate; sequence KN. Arg-92 serves as a coordination point for UDP-N-acetyl-alpha-D-glucosamine. The active-site Proton donor is Cys-116. 2-(S-cysteinyl)pyruvic acid O-phosphothioketal is present on Cys-116. UDP-N-acetyl-alpha-D-glucosamine contacts are provided by residues 121–125, Asp-306, and Ile-328; that span reads RPIDL.

The protein belongs to the EPSP synthase family. MurA subfamily.

It is found in the cytoplasm. The catalysed reaction is phosphoenolpyruvate + UDP-N-acetyl-alpha-D-glucosamine = UDP-N-acetyl-3-O-(1-carboxyvinyl)-alpha-D-glucosamine + phosphate. Its pathway is cell wall biogenesis; peptidoglycan biosynthesis. In terms of biological role, cell wall formation. Adds enolpyruvyl to UDP-N-acetylglucosamine. This is UDP-N-acetylglucosamine 1-carboxyvinyltransferase 2 from Streptococcus pyogenes serotype M1.